Reading from the N-terminus, the 33-residue chain is Unknown 31.6 kDa protein from 2D-PAGE (33 aa).

This is Unknown 31.6 kDa protein from 2D-PAGE from Onion yellows phytoplasma.